The following is a 546-amino-acid chain: Chaperonin GroEL (546 aa).

Residues 30–33, lysine 51, 87–91, glycine 415, 479–481, and aspartate 495 each bind ATP; these read TLGP, DGTTT, and NAA. The disordered stretch occupies residues 525–546; sequence PEPKKDMPPMPGGGMGGMGGMY. The segment covering 536-546 has biased composition (gly residues); the sequence is GGGMGGMGGMY.

It belongs to the chaperonin (HSP60) family. As to quaternary structure, forms a cylinder of 14 subunits composed of two heptameric rings stacked back-to-back. Interacts with the co-chaperonin GroES.

It localises to the cytoplasm. The enzyme catalyses ATP + H2O + a folded polypeptide = ADP + phosphate + an unfolded polypeptide.. Together with its co-chaperonin GroES, plays an essential role in assisting protein folding. The GroEL-GroES system forms a nano-cage that allows encapsulation of the non-native substrate proteins and provides a physical environment optimized to promote and accelerate protein folding. This chain is Chaperonin GroEL, found in Solidesulfovibrio magneticus (strain ATCC 700980 / DSM 13731 / RS-1) (Desulfovibrio magneticus).